Here is a 208-residue protein sequence, read N- to C-terminus: Uracil phosphoribosyltransferase (208 aa).

Residues arginine 78, arginine 103, and 130 to 138 each bind 5-phospho-alpha-D-ribose 1-diphosphate; that span reads DPMLATGGS. Uracil-binding positions include isoleucine 193 and 198–200; that span reads GDA. Aspartate 199 lines the 5-phospho-alpha-D-ribose 1-diphosphate pocket.

The protein belongs to the UPRTase family. Mg(2+) is required as a cofactor.

The enzyme catalyses UMP + diphosphate = 5-phospho-alpha-D-ribose 1-diphosphate + uracil. It participates in pyrimidine metabolism; UMP biosynthesis via salvage pathway; UMP from uracil: step 1/1. Its activity is regulated as follows. Allosterically activated by GTP. In terms of biological role, catalyzes the conversion of uracil and 5-phospho-alpha-D-ribose 1-diphosphate (PRPP) to UMP and diphosphate. The polypeptide is Uracil phosphoribosyltransferase (Shewanella oneidensis (strain ATCC 700550 / JCM 31522 / CIP 106686 / LMG 19005 / NCIMB 14063 / MR-1)).